A 482-amino-acid polypeptide reads, in one-letter code: Beta-1,3-glucan-binding protein 2 (482 aa).

Residues M1–Q18 form the signal peptide. The CBM39 domain maps to Y23–N122. N124 is a glycosylation site (N-linked (GlcNAc...) asparagine). The segment at V127–R153 is disordered. The 355-residue stretch at V128 to L482 folds into the GH16 domain. N-linked (GlcNAc...) asparagine glycosylation is present at N189.

Monomer. N-glycosylated. In terms of tissue distribution, cuticle and fat body.

It is found in the secreted. In terms of biological role, involved in the recognition of invading microorganisms. Binds specifically to beta-1,3-glucan and lipoteichoic acid and causes aggregation of invading microorganisms. Binding to beta-1,3-glucan activates the phenoloxidase cascade. This Manduca sexta (Tobacco hawkmoth) protein is Beta-1,3-glucan-binding protein 2.